A 228-amino-acid polypeptide reads, in one-letter code: NAD(P)H-hydrate epimerase (228 aa).

One can recognise a YjeF N-terminal domain in the interval 9–209; it reads VRAVERLAHR…LLGLTPAFLA (201 aa). 53–57 lines the (6S)-NADPHX pocket; sequence NNGGD. 2 residues coordinate K(+): Asn-54 and Asp-115. (6S)-NADPHX contacts are provided by residues 119–125 and Asp-148; that span reads GIGLARP. Ser-151 contacts K(+).

The protein belongs to the NnrE/AIBP family. K(+) serves as cofactor.

It catalyses the reaction (6R)-NADHX = (6S)-NADHX. The enzyme catalyses (6R)-NADPHX = (6S)-NADPHX. Catalyzes the epimerization of the S- and R-forms of NAD(P)HX, a damaged form of NAD(P)H that is a result of enzymatic or heat-dependent hydration. This is a prerequisite for the S-specific NAD(P)H-hydrate dehydratase to allow the repair of both epimers of NAD(P)HX. The sequence is that of NAD(P)H-hydrate epimerase from Bordetella pertussis (strain CS).